The chain runs to 182 residues: Large ribosomal subunit protein uL5 (182 aa).

It belongs to the universal ribosomal protein uL5 family. Part of the 50S ribosomal subunit; part of the 5S rRNA/L5/L18/L25 subcomplex. Contacts the 5S rRNA and the P site tRNA. Forms a bridge to the 30S subunit in the 70S ribosome.

This is one of the proteins that bind and probably mediate the attachment of the 5S RNA into the large ribosomal subunit, where it forms part of the central protuberance. In the 70S ribosome it contacts protein S13 of the 30S subunit (bridge B1b), connecting the 2 subunits; this bridge is implicated in subunit movement. Contacts the P site tRNA; the 5S rRNA and some of its associated proteins might help stabilize positioning of ribosome-bound tRNAs. This chain is Large ribosomal subunit protein uL5, found in Thermus aquaticus.